A 181-amino-acid chain; its full sequence is Inner membrane-spanning protein YciB (181 aa).

A run of 5 helical transmembrane segments spans residues leucine 10 to isoleucine 30, methionine 50 to aspartate 70, alanine 72 to serine 92, valine 118 to phenylalanine 138, and phenylalanine 148 to leucine 168.

Belongs to the YciB family.

It is found in the cell inner membrane. Its function is as follows. Plays a role in cell envelope biogenesis, maintenance of cell envelope integrity and membrane homeostasis. The protein is Inner membrane-spanning protein YciB of Shewanella sp. (strain MR-4).